The primary structure comprises 178 residues: Alkyl hydroperoxide reductase AhpD (178 aa).

C130 serves as the catalytic Proton donor. Cysteines 130 and 133 form a disulfide. The active-site Cysteine sulfenic acid (-SOH) intermediate is C133.

This sequence belongs to the AhpD family. As to quaternary structure, homotrimer.

The catalysed reaction is N(6)-[(R)-dihydrolipoyl]-L-lysyl-[lipoyl-carrier protein] + a hydroperoxide = N(6)-[(R)-lipoyl]-L-lysyl-[lipoyl-carrier protein] + an alcohol + H2O. Its function is as follows. Antioxidant protein with alkyl hydroperoxidase activity. Required for the reduction of the AhpC active site cysteine residues and for the regeneration of the AhpC enzyme activity. The polypeptide is Alkyl hydroperoxide reductase AhpD (Mycobacterium marinum (strain ATCC BAA-535 / M)).